A 1088-amino-acid chain; its full sequence is V-type proton ATPase catalytic subunit A (1088 aa).

257–264 (GAFGCGKT) is a binding site for ATP. The DOD-type homing endonuclease domain maps to 485-662 (LLGTWAGIGN…LVKIAHSLGI (178 aa)).

The protein belongs to the ATPase alpha/beta chains family. V-ATPase is a heteromultimeric enzyme composed of a peripheral catalytic V1 complex (components A to H) attached to an integral membrane V0 proton pore complex (components: a, c, c', c'', d, e, f and VOA1). In terms of processing, this protein undergoes a protein self splicing that involves a post-translational excision of the VDE intervening region (intein) followed by peptide ligation.

The protein localises to the vacuole membrane. The catalysed reaction is ATP + H2O + 4 H(+)(in) = ADP + phosphate + 5 H(+)(out). Functionally, catalytic subunit of the V1 complex of vacuolar(H+)-ATPase (V-ATPase), a multisubunit enzyme composed of a peripheral complex (V1) that hydrolyzes ATP and a membrane integral complex (V0) that translocates protons. V-ATPase is responsible for acidifying and maintaining the pH of intracellular compartments. In terms of biological role, VDE is an endonuclease that can cleave at a site present in a VMA1 allele that lacks the derived endonuclease segment of the open reading frame; cleavage at this site only occurs during meiosis and initiates 'homing', a genetic event that converts a VMA1 allele lacking VDE into one that contains it. This is V-type proton ATPase catalytic subunit A (VMA1) from Candida tropicalis (Yeast).